The following is a 339-amino-acid chain: Ketol-acid reductoisomerase (NADP(+)) (339 aa).

Residues 1–182 (MKIYYEKDAD…GNTRAGVIET (182 aa)) enclose the KARI N-terminal Rossmann domain. NADP(+) is bound by residues 24 to 27 (YGSQ), serine 51, serine 53, and 83 to 86 (DEKQ). Residue histidine 108 is part of the active site. Glycine 134 is an NADP(+) binding site. In terms of domain architecture, KARI C-terminal knotted spans 183–328 (SFREETETDL…EKLRGMMHWA (146 aa)). Mg(2+) is bound by residues aspartate 191, glutamate 195, glutamate 227, and glutamate 231. Serine 252 is a binding site for substrate.

The protein belongs to the ketol-acid reductoisomerase family. Requires Mg(2+) as cofactor.

It carries out the reaction (2R)-2,3-dihydroxy-3-methylbutanoate + NADP(+) = (2S)-2-acetolactate + NADPH + H(+). It catalyses the reaction (2R,3R)-2,3-dihydroxy-3-methylpentanoate + NADP(+) = (S)-2-ethyl-2-hydroxy-3-oxobutanoate + NADPH + H(+). The protein operates within amino-acid biosynthesis; L-isoleucine biosynthesis; L-isoleucine from 2-oxobutanoate: step 2/4. It participates in amino-acid biosynthesis; L-valine biosynthesis; L-valine from pyruvate: step 2/4. In terms of biological role, involved in the biosynthesis of branched-chain amino acids (BCAA). Catalyzes an alkyl-migration followed by a ketol-acid reduction of (S)-2-acetolactate (S2AL) to yield (R)-2,3-dihydroxy-isovalerate. In the isomerase reaction, S2AL is rearranged via a Mg-dependent methyl migration to produce 3-hydroxy-3-methyl-2-ketobutyrate (HMKB). In the reductase reaction, this 2-ketoacid undergoes a metal-dependent reduction by NADPH to yield (R)-2,3-dihydroxy-isovalerate. The protein is Ketol-acid reductoisomerase (NADP(+)) of Hyphomonas neptunium (strain ATCC 15444).